The chain runs to 89 residues: Small ribosomal subunit protein uS19 (89 aa).

Belongs to the universal ribosomal protein uS19 family.

In terms of biological role, protein S19 forms a complex with S13 that binds strongly to the 16S ribosomal RNA. The polypeptide is Small ribosomal subunit protein uS19 (Parabacteroides distasonis (strain ATCC 8503 / DSM 20701 / CIP 104284 / JCM 5825 / NCTC 11152)).